The chain runs to 343 residues: Ribosomal RNA small subunit methyltransferase C (343 aa).

It belongs to the methyltransferase superfamily. RsmC family. Monomer.

Its subcellular location is the cytoplasm. It carries out the reaction guanosine(1207) in 16S rRNA + S-adenosyl-L-methionine = N(2)-methylguanosine(1207) in 16S rRNA + S-adenosyl-L-homocysteine + H(+). In terms of biological role, specifically methylates the guanine in position 1207 of 16S rRNA in the 30S particle. This chain is Ribosomal RNA small subunit methyltransferase C, found in Shewanella sediminis (strain HAW-EB3).